We begin with the raw amino-acid sequence, 79 residues long: UPF0154 protein Lm4b_01315 (79 aa).

A helical membrane pass occupies residues 2–22 (WIYILVGIICLLAGLAGGFFI). A compositionally biased stretch (polar residues) spans 57–66 (KINQMMSAMN). The tract at residues 57 to 79 (KINQMMSAMNKQQEKEKPKKTKK) is disordered.

The protein belongs to the UPF0154 family.

It is found in the cell membrane. The chain is UPF0154 protein Lm4b_01315 from Listeria monocytogenes serotype 4b (strain CLIP80459).